The sequence spans 352 residues: Rhodopsin (352 aa).

Residues 1 to 36 lie on the Extracellular side of the membrane; it reads MNGTEGPFFYIPMVNTTGIVRSPYEYPQYYLVNPAA. Asparagine 2 and asparagine 15 each carry an N-linked (GlcNAc...) asparagine glycan. The chain crosses the membrane as a helical span at residues 37 to 61; it reads YACLGAYMFFLILVGFPVNFLTLYV. At 62–73 the chain is on the cytoplasmic side; it reads TLEHKKLRTPLN. The chain crosses the membrane as a helical span at residues 74–96; sequence YILLNLAVADLFMVFGGFTTTMY. Topologically, residues 97-110 are extracellular; the sequence is TSMHGYFVLGRLGC. Cysteine 110 and cysteine 187 are joined by a disulfide. The helical transmembrane segment at 111-133 threads the bilayer; the sequence is NIEGFFATLGGEIALWSLVVLAI. The 'Ionic lock' involved in activated form stabilization motif lies at 134-136; it reads ERW. The Cytoplasmic portion of the chain corresponds to 134 to 152; it reads ERWVVVCKPISNFRFGENH. The helical transmembrane segment at 153–173 threads the bilayer; the sequence is AIMGVAFTWFMASACAVPPLV. Topologically, residues 174 to 202 are extracellular; it reads GWSRYIPEGMQCSCGVDYYTRAEGFNNES. N-linked (GlcNAc...) asparagine glycosylation is present at asparagine 200. The chain crosses the membrane as a helical span at residues 203-224; it reads FVIYMFIVHFCIPLAVVGFCYG. The Cytoplasmic portion of the chain corresponds to 225–252; the sequence is RLLCAVKEAAAAQQESETTQRAEREVSR. The chain crosses the membrane as a helical span at residues 253-274; sequence MVVIMVIGFLVCWLPYASVAWY. The Extracellular portion of the chain corresponds to 275-286; that stretch reads IFTHQGSEFGPP. Residues 287–308 traverse the membrane as a helical segment; the sequence is FMTVPAFFAKSSSIYNPMIYIC. N6-(retinylidene)lysine is present on lysine 296. The Cytoplasmic segment spans residues 309–352; that stretch reads MNKQFRHCMITTLCCGKNPFEEEEGASTTKTEASSVSSSSVSPA. S-palmitoyl cysteine attachment occurs at residues cysteine 322 and cysteine 323. The tract at residues 331–352 is disordered; that stretch reads EEGASTTKTEASSVSSSSVSPA. Positions 342 to 352 are enriched in low complexity; it reads SSVSSSSVSPA.

This sequence belongs to the G-protein coupled receptor 1 family. Opsin subfamily. In terms of processing, phosphorylated on some or all of the serine and threonine residues present in the C-terminal region. Post-translationally, contains one covalently linked retinal chromophore.

The protein localises to the membrane. The protein resides in the cell projection. It is found in the cilium. It localises to the photoreceptor outer segment. Functionally, photoreceptor required for image-forming vision at low light intensity. While most salt water fish species use retinal as chromophore, most freshwater fish use 3-dehydroretinal, or a mixture of retinal and 3-dehydroretinal. Light-induced isomerization of 11-cis to all-trans retinal triggers a conformational change that activates signaling via G-proteins. Subsequent receptor phosphorylation mediates displacement of the bound G-protein alpha subunit by arrestin and terminates signaling. This chain is Rhodopsin (rho), found in Zosterisessor ophiocephalus (Grass goby).